We begin with the raw amino-acid sequence, 93 residues long: Cobalt transport protein CbiN (93 aa).

Transmembrane regions (helical) follow at residues 5 to 25 and 63 to 83; these read LMLLAMVVALVILPFFINHGG and LLFTLQGSLGAAVIFYILGYC.

The protein belongs to the CbiN family. In terms of assembly, forms an energy-coupling factor (ECF) transporter complex composed of an ATP-binding protein (A component, CbiO), a transmembrane protein (T component, CbiQ) and 2 possible substrate-capture proteins (S components, CbiM and CbiN) of unknown stoichimetry.

The protein resides in the cell inner membrane. It participates in cofactor biosynthesis; adenosylcobalamin biosynthesis. Functionally, part of the energy-coupling factor (ECF) transporter complex CbiMNOQ involved in cobalt import. The polypeptide is Cobalt transport protein CbiN (Salmonella choleraesuis (strain SC-B67)).